Consider the following 523-residue polypeptide: GMP synthase [glutamine-hydrolyzing] (523 aa).

The Glutamine amidotransferase type-1 domain occupies 8–205; the sequence is KILILDFGSQ…VVNICGCETK (198 aa). Cys85 acts as the Nucleophile in catalysis. Residues His179 and Glu181 contribute to the active site. Residues 206–398 form the GMPS ATP-PPase domain; sequence WTAENIIEDA…LGLPAEMLNR (193 aa). ATP is bound at residue 233–239; the sequence is SGGVDSS.

Homodimer.

The catalysed reaction is XMP + L-glutamine + ATP + H2O = GMP + L-glutamate + AMP + diphosphate + 2 H(+). It participates in purine metabolism; GMP biosynthesis; GMP from XMP (L-Gln route): step 1/1. Its function is as follows. Catalyzes the synthesis of GMP from XMP. The protein is GMP synthase [glutamine-hydrolyzing] of Glaesserella parasuis serovar 5 (strain SH0165) (Haemophilus parasuis).